A 131-amino-acid chain; its full sequence is Profilin-2 (131 aa).

The protein belongs to the profilin family. Occurs in many kinds of cells as a complex with monomeric actin in a 1:1 ratio.

It is found in the cytoplasm. Its subcellular location is the cytoskeleton. Functionally, binds to actin and affects the structure of the cytoskeleton. At high concentrations, profilin prevents the polymerization of actin, whereas it enhances it at low concentrations. By binding to PIP2, it inhibits the formation of IP3 and DG. The protein is Profilin-2 of Lilium longiflorum (Trumpet lily).